Reading from the N-terminus, the 318-residue chain is UDP-N-acetylenolpyruvoylglucosamine reductase (318 aa).

Residues 39–202 (VGGPADLLVR…TRVQLTLRPG (164 aa)) form the FAD-binding PCMH-type domain. Arginine 182 is an active-site residue. Basic and acidic residues predominate over residues 214–223 (DRDGRRRTQP). The disordered stretch occupies residues 214 to 235 (DRDGRRRTQPLDRPTFGSTFTN). Catalysis depends on serine 231, which acts as the Proton donor. The active site involves glutamate 301.

Belongs to the MurB family. It depends on FAD as a cofactor.

Its subcellular location is the cytoplasm. The enzyme catalyses UDP-N-acetyl-alpha-D-muramate + NADP(+) = UDP-N-acetyl-3-O-(1-carboxyvinyl)-alpha-D-glucosamine + NADPH + H(+). It participates in cell wall biogenesis; peptidoglycan biosynthesis. Functionally, cell wall formation. In Anaeromyxobacter sp. (strain Fw109-5), this protein is UDP-N-acetylenolpyruvoylglucosamine reductase.